Consider the following 1318-residue polypeptide: DNA-directed RNA polymerase subunit beta' (1318 aa).

Residues Cys-221, Cys-295, Cys-302, and Cys-305 each coordinate Zn(2+).

It belongs to the RNA polymerase beta' chain family. RpoC2 subfamily. In cyanobacteria the RNAP catalytic core is composed of 2 alpha, 1 beta, 1 beta', 1 gamma and 1 omega subunit. When a sigma factor is associated with the core the holoenzyme is formed, which can initiate transcription. The cofactor is Zn(2+).

The catalysed reaction is RNA(n) + a ribonucleoside 5'-triphosphate = RNA(n+1) + diphosphate. DNA-dependent RNA polymerase catalyzes the transcription of DNA into RNA using the four ribonucleoside triphosphates as substrates. In Synechococcus elongatus (strain ATCC 33912 / PCC 7942 / FACHB-805) (Anacystis nidulans R2), this protein is DNA-directed RNA polymerase subunit beta'.